Consider the following 447-residue polypeptide: uncharacterized protein (447 aa).

[4Fe-4S] cluster-binding residues include C87, C93, C96, and C162. Residues Q284, Y313, E334, and D375 each contribute to the S-adenosyl-L-methionine site. Catalysis depends on C402, which acts as the Nucleophile.

It belongs to the class I-like SAM-binding methyltransferase superfamily. RNA M5U methyltransferase family.

This is an uncharacterized protein from Nanoarchaeum equitans (strain Kin4-M).